Reading from the N-terminus, the 1121-residue chain is Linoleate 10R-lipoxygenase (1121 aa).

The segment at 1–66 (MLRRFSSTFK…NEKKGNSVSP (66 aa)) is disordered. The segment covering 22–36 (TASSSSAAVANTNNN) has biased composition (low complexity). A compositionally biased stretch (basic and acidic residues) spans 50–61 (SSSDDDRNEKKG). The active-site Proton acceptor is the histidine 253. Ca(2+)-binding residues include aspartate 254, serine 269, tyrosine 271, aspartate 273, and serine 275.

Belongs to the peroxidase family.

The catalysed reaction is (9Z,12Z)-octadecadienoate + O2 = (8E,10R,12Z)-10-hydroperoxyoctadeca-8,12-dienoate. Its function is as follows. Responsible for the synthesis of various fatty acid-derived oxylipins. Oxidizes linoleic acid primarily to 10R-hydroperoxy-8,12-octadecadienoic acid (10R-HPODE) and, to a lesser extent, 8R-hydroperoxylinoleic acid (8R-HPODE). Also synthesizes 10-hydroxy-octadeca-8,12-dienoic acid (10-HODE) from linoleic acid and primarily 8R-hydroxy-octadeca-9-monoenoic acid (8-HOME, also known as psiB beta) from oleic acid. 8-HOME forms part of psi factor, a mixture of oxylipins that regulates the balance between sexual and asexual spore production. Displays epoxyalcohol synthase activity. Plays a role in the synthesis of prostaglandins which may be required for pathogenicity. The protein is Linoleate 10R-lipoxygenase of Aspergillus fumigatus (strain ATCC MYA-4609 / CBS 101355 / FGSC A1100 / Af293) (Neosartorya fumigata).